A 235-amino-acid chain; its full sequence is Ribosomal RNA small subunit methyltransferase G (235 aa).

S-adenosyl-L-methionine contacts are provided by residues Gly74, Phe79, 97-99 (EAT), 125-126 (AE), and Arg144.

This sequence belongs to the methyltransferase superfamily. RNA methyltransferase RsmG family.

The protein resides in the cytoplasm. Its function is as follows. Specifically methylates the N7 position of a guanine in 16S rRNA. In Dehalococcoides mccartyi (strain ATCC BAA-2100 / JCM 16839 / KCTC 5957 / BAV1), this protein is Ribosomal RNA small subunit methyltransferase G.